The chain runs to 116 residues: Non-specific lipid-transfer protein (116 aa).

The first 23 residues, 1–23 (MASMKVVCVALIMCIVIAPMAES), serve as a signal peptide directing secretion. Cystine bridges form between Cys27–Cys74, Cys37–Cys51, Cys52–Cys97, and Cys72–Cys111.

It belongs to the plant LTP family.

Plant non-specific lipid-transfer proteins transfer phospholipids as well as galactolipids across membranes. May play a role in wax or cutin deposition in the cell walls of expanding epidermal cells and certain secretory tissues. The chain is Non-specific lipid-transfer protein from Cicer arietinum (Chickpea).